Reading from the N-terminus, the 357-residue chain is Set1 complex component swd2 (357 aa).

4 WD repeats span residues 24–65, 110–149, 199–241, and 247–289; these read NFVG…KSLA, GHKQ…CQGL, PPHV…RVPS, and TQDG…QTVN.

This sequence belongs to the WD repeat SWD2 family. In terms of assembly, component of the Set1 complex composed of ash2, sdc1, set1, shg1, spp1, swd1, swd2 and swd3.

The protein localises to the nucleus. Its function is as follows. The Set1 complex specifically methylates 'Lys-4' of histone H3. The sequence is that of Set1 complex component swd2 from Schizosaccharomyces pombe (strain 972 / ATCC 24843) (Fission yeast).